A 418-amino-acid polypeptide reads, in one-letter code: CinA-like protein (418 aa).

It belongs to the CinA family.

The polypeptide is CinA-like protein (Leptospira borgpetersenii serovar Hardjo-bovis (strain L550)).